We begin with the raw amino-acid sequence, 377 residues long: Cyclin-I (377 aa).

The disordered stretch occupies residues 357–377 (DLSRQEGHASPCPPLQPVSVM). The span at 367-377 (PCPPLQPVSVM) shows a compositional bias: pro residues.

It belongs to the cyclin family. In terms of tissue distribution, highest levels in adult heart, brain and skeletal muscle. Lower levels in adult placenta, lung, kidney and pancreas. Also high levels in fetal brain and lower levels in fetal lung, liver and kidney. Also abundant in testis and thyroid.

The protein localises to the nucleus membrane. This is Cyclin-I from Homo sapiens (Human).